The following is a 629-amino-acid chain: tRNA uridine 5-carboxymethylaminomethyl modification enzyme MnmG (629 aa).

13–18 (GGGHAG) lines the FAD pocket. Residue 273-287 (GPRYCPSIEDKITRF) coordinates NAD(+).

The protein belongs to the MnmG family. As to quaternary structure, homodimer. Heterotetramer of two MnmE and two MnmG subunits. FAD serves as cofactor.

The protein resides in the cytoplasm. In terms of biological role, NAD-binding protein involved in the addition of a carboxymethylaminomethyl (cmnm) group at the wobble position (U34) of certain tRNAs, forming tRNA-cmnm(5)s(2)U34. The chain is tRNA uridine 5-carboxymethylaminomethyl modification enzyme MnmG from Colwellia psychrerythraea (strain 34H / ATCC BAA-681) (Vibrio psychroerythus).